We begin with the raw amino-acid sequence, 425 residues long: ATP-dependent RNA helicase RhlB (425 aa).

A Q motif motif is present at residues 9–37 (TRFADLALHPKIQQAISSAGFEYCTPIQA). The Helicase ATP-binding domain occupies 40–218 (LPVALSNRDV…YEHMNAPTKL (179 aa)). 53–60 (AQTGTGKT) contributes to the ATP binding site. Positions 164–167 (DEAD) match the DEAD box motif. Residues 242–389 (KFPLLLTLIE…VTKYDGDALL (148 aa)) form the Helicase C-terminal domain. Residues 391-425 (DLRRPRPIQRRRRHNSGGGKGKPRGRRSGPPRNAS) are disordered. Residues 395–419 (PRPIQRRRRHNSGGGKGKPRGRRSG) are compositionally biased toward basic residues.

Belongs to the DEAD box helicase family. RhlB subfamily. Component of the RNA degradosome, which is a multiprotein complex involved in RNA processing and mRNA degradation.

Its subcellular location is the cytoplasm. The catalysed reaction is ATP + H2O = ADP + phosphate + H(+). Functionally, DEAD-box RNA helicase involved in RNA degradation. Has RNA-dependent ATPase activity and unwinds double-stranded RNA. The polypeptide is ATP-dependent RNA helicase RhlB (Idiomarina loihiensis (strain ATCC BAA-735 / DSM 15497 / L2-TR)).